The chain runs to 616 residues: Proline--tRNA ligase (616 aa).

It belongs to the class-II aminoacyl-tRNA synthetase family. ProS type 1 subfamily. As to quaternary structure, homodimer.

The protein resides in the cytoplasm. It catalyses the reaction tRNA(Pro) + L-proline + ATP = L-prolyl-tRNA(Pro) + AMP + diphosphate. In terms of biological role, catalyzes the attachment of proline to tRNA(Pro) in a two-step reaction: proline is first activated by ATP to form Pro-AMP and then transferred to the acceptor end of tRNA(Pro). As ProRS can inadvertently accommodate and process non-cognate amino acids such as alanine and cysteine, to avoid such errors it has two additional distinct editing activities against alanine. One activity is designated as 'pretransfer' editing and involves the tRNA(Pro)-independent hydrolysis of activated Ala-AMP. The other activity is designated 'posttransfer' editing and involves deacylation of mischarged Ala-tRNA(Pro). The misacylated Cys-tRNA(Pro) is not edited by ProRS. The protein is Proline--tRNA ligase of Lactococcus lactis subsp. cremoris (strain MG1363).